We begin with the raw amino-acid sequence, 185 residues long: Elongation factor P (185 aa).

Belongs to the elongation factor P family.

The protein resides in the cytoplasm. It participates in protein biosynthesis; polypeptide chain elongation. Its function is as follows. Involved in peptide bond synthesis. Stimulates efficient translation and peptide-bond synthesis on native or reconstituted 70S ribosomes in vitro. Probably functions indirectly by altering the affinity of the ribosome for aminoacyl-tRNA, thus increasing their reactivity as acceptors for peptidyl transferase. This is Elongation factor P from Dechloromonas aromatica (strain RCB).